The primary structure comprises 339 residues: tRNA N6-adenosine threonylcarbamoyltransferase (339 aa).

The Fe cation site is built by H114 and H118. Substrate is bound by residues 137 to 141, D170, G183, D187, and N277; that span reads VVSGG. D305 lines the Fe cation pocket.

The protein belongs to the KAE1 / TsaD family. It depends on Fe(2+) as a cofactor.

The protein localises to the cytoplasm. The catalysed reaction is L-threonylcarbamoyladenylate + adenosine(37) in tRNA = N(6)-L-threonylcarbamoyladenosine(37) in tRNA + AMP + H(+). Its function is as follows. Required for the formation of a threonylcarbamoyl group on adenosine at position 37 (t(6)A37) in tRNAs that read codons beginning with adenine. Is involved in the transfer of the threonylcarbamoyl moiety of threonylcarbamoyl-AMP (TC-AMP) to the N6 group of A37, together with TsaE and TsaB. TsaD likely plays a direct catalytic role in this reaction. The sequence is that of tRNA N6-adenosine threonylcarbamoyltransferase from Clostridium beijerinckii (strain ATCC 51743 / NCIMB 8052) (Clostridium acetobutylicum).